A 276-amino-acid polypeptide reads, in one-letter code: Thiazole synthase (276 aa).

Catalysis depends on K117, which acts as the Schiff-base intermediate with DXP. Residues G178, 204 to 205 (AG), and 226 to 227 (NT) each bind 1-deoxy-D-xylulose 5-phosphate.

This sequence belongs to the ThiG family. As to quaternary structure, homotetramer. Forms heterodimers with either ThiH or ThiS.

The protein localises to the plastid. Its subcellular location is the chloroplast. It carries out the reaction [ThiS sulfur-carrier protein]-C-terminal-Gly-aminoethanethioate + 2-iminoacetate + 1-deoxy-D-xylulose 5-phosphate = [ThiS sulfur-carrier protein]-C-terminal Gly-Gly + 2-[(2R,5Z)-2-carboxy-4-methylthiazol-5(2H)-ylidene]ethyl phosphate + 2 H2O + H(+). Its pathway is cofactor biosynthesis; thiamine diphosphate biosynthesis. Its function is as follows. Catalyzes the rearrangement of 1-deoxy-D-xylulose 5-phosphate (DXP) to produce the thiazole phosphate moiety of thiamine. Sulfur is provided by the thiocarboxylate moiety of the carrier protein ThiS. In vitro, sulfur can be provided by H(2)S. The polypeptide is Thiazole synthase (Gracilaria tenuistipitata var. liui (Red alga)).